Here is a 1960-residue protein sequence, read N- to C-terminus: Nuclear pore complex protein Nup98-Nup96 (1960 aa).

46 repeat units span residues 2–3 (FG), 9–10 (FG), 18–19 (FG), 30–31 (FG), 35–36 (FG), 43–44 (FG), 59–60 (FG), 73–74 (FG), 81–82 (FG), 92–93 (FG), 105–106 (FG), 117–118 (FG), 125–126 (FG), 135–136 (FG), 148–149 (FG), 160–161 (FG), 163–164 (FG), 174–175 (FG), 264–265 (FG), 266–267 (FG), 282–283 (FG), 293–294 (FG), 304–305 (FG), 309–310 (FG), 319–320 (FG), 333–334 (FG), 352–353 (FG), 358–359 (FG), 365–366 (FG), 377–378 (FG), 384–385 (FG), 387–388 (FG), 400–401 (FG), 413–414 (FG), 426–427 (FG), 428–429 (FG), 441–442 (FG), 454–455 (FG), 467–468 (FG), 493–494 (FG), 496–497 (FG), 516–517 (FG), 527–528 (FG), 546–547 (FG), 553–554 (FG), and 565–566 (FG). A 46 X 2 AA repeats of F-G region spans residues 2–566 (FGGAKPSFGA…GGSLGGGGFG (565 aa)). Disordered regions lie at residues 698-768 (KSVE…WLHP) and 781-860 (TGMD…AANQ). Residues 704-718 (NPSSSIGSAPNTPQS) show a composition bias toward polar residues. Over residues 755-768 (ESQDNGRRESWLHP) the composition is skewed to basic and acidic residues. 2 stretches are compositionally biased toward polar residues: residues 781–794 (TGMD…STLN) and 806–850 (RPSS…SNRS). The 143-residue stretch at 886 to 1028 (RVGYYTIPSL…GSWVFRVKHF (143 aa)) folds into the Peptidase S59 domain. Ser1029 serves as the catalytic Nucleophile.

It belongs to the nucleoporin GLFG family. As to quaternary structure, part of the nuclear pore complex (NPC). Interacts with Rae1. Nuclear pore complex protein Nup98: Interacts with pzg and Chro. Interacts with MBD-R2; the interaction allows Nup98 recruitment to chromatin. Interacts with Trx. Interacts with Wds. Interacts with Mgtor and Cp190. Upon ecdysone stimulation, interacts with EcR, CTCF, su(Hw) and Trl. In terms of processing, isoform A and isoform C are autoproteolytically cleaved to yield Nup98 and Nup96 or Nup98 only, respectively. In terms of tissue distribution, expressed in brain.

The protein localises to the chromosome. Its subcellular location is the nucleus. The protein resides in the nucleoplasm. It is found in the nucleus membrane. It localises to the nuclear pore complex. Part of the nuclear pore complex (NPC). Required for MAD import as part of the Nup107-160 complex and required for nuclear export of Moe probably via its association with Rae1. Plays a role in nuclear mRNA export. Promotes cell antiviral response by up-regulating FoxK-dependent antiviral gene transcription. In germline stem cells, involved in their maintenance and division together with the TGF-Beta and EGFR signaling pathways. In larval lymph glands, has a role in the maintenance of hematopoiesis by regulating Pvr expression. Its function is as follows. Part of the nuclear pore complex (NPC). In the nucleoplasm, binds to transcriptionally active chromatin with a preference for regulatory regions; co-localizes with RNA polymerase II in a RNA-independent manner and before transition into transcription elongation. Plays a role in the transcriptional memory process by stabilizing enhancer-promoter loops and by mediating anchoring of chromatin to the nuclear pore complex region. During larval development, interacts with trx and MBD-R2 and regulates transcription of developmental genes including ecdysone-responsive genes such as Eip74 and E23. In terms of biological role, part of the nuclear pore complex (NPC). The protein is Nuclear pore complex protein Nup98-Nup96 of Drosophila melanogaster (Fruit fly).